A 672-amino-acid chain; its full sequence is MLDKTTIDGQEDIVTHPVPKRLLNSAECPTPHVNSLEQYKSMWKESVEQPEKFFGNLGRELLSWSKPFETVQYGSFEAGDVAWFLEGELNASYNCVDRHAFKNPDKIAIIHEGDEPDQVRRITYGELLREVCRMANVLKGLGVRKGDPVAIYMPMIPETIVAILACARIGAIHSVVFAGFSAEILRDRVVDCATRVVLTSDEGRRGGKNIATKCIVDEALRDYENHSVEHVLVFRRTGSPVPWVQGRDVWWHEEMAKARTFCSPEPMSAEDPLFLLYTSGSTGTPKGILHTTGGYLLGVAATVKYIFDYQENDIYACMADIGWVTGHSYIVYGPLTLGATTVLFESTPTYPNPSRFWQLIEKHKITQFYTAPTAIRALQRLGDQWLDNIDMSSLRVLGSVGEPINREAWDWYNEKVGKGRCAVVDTYWQTETGSIIVSPLPGATPTKPGSATLPFFGIDPVLLDPTTGKELTATGQTGVLAIRKPRPSMARSVYNNHSRFVETYLKPYPGYYFTGDGALRDDDGYIWIRGRVDDVINVSGHRLSTSEIESALVNHEAVAESAVVGAHDDLTGQCIHAFVSLKPHIQIADGLEKVLTLQVRKTIGPFAAPRRIYIVSDHPKTRSGKIMRRILRKIVNGEHDQLGDISTLADPSIVAVLINKVQRLNTEANIYI.

CoA contacts are provided by residues 205 to 208 (RGGK) and T325. Residues 401–403 (GEP), 425–430 (DTYWQT), D516, and R531 contribute to the ATP site. S539 contacts CoA. R542 lines the ATP pocket. Residue R600 coordinates CoA.

The protein belongs to the ATP-dependent AMP-binding enzyme family.

It carries out the reaction acetate + ATP + CoA = acetyl-CoA + AMP + diphosphate. This Phycomyces blakesleeanus (strain ATCC 8743b / DSM 1359 / FGSC 10004 / NBRC 33097 / NRRL 1555) protein is Acetyl-coenzyme A synthetase (facA).